The primary structure comprises 403 residues: MLKKLKNFILFSSIFSPIAFAISCSNTGVVKQEDVSVSQGQWDKSITFGVSEAWLNKKKGGEKVNKEVINTFLENFKKEFNKLKNANDKTKNFDDVDFKVTPIQDFTVLLNNLSTDNPELDFGINASGKLVEFLKNNPGIITPALETTTNSFVFDKEKDKFYVDGTDSDPLVKIAKEINKIFVETPYASWTDENHKWNGNVYQSVYDPTVQANFYRGMIWIKGNDETLAKIKKAWNDKDWNTFRNFGILHGKDNSFSKFKLEETILKNHFQNKFTTLNEDRSAHPNAYKQKSADTLGTLDDFHIAFSEEGSFAWTHNKSATKPFETKANEKMEALIVTNPIPYDVGVFRKSVNQLEQNLIVQTFINLAKNKQDTYGPLLGYNGYKKIDNFQKEIVEVYEKAIK.

Positions 1–23 (MLKKLKNFILFSSIFSPIAFAIS) are cleaved as a signal peptide. C24 is lipidated: N-palmitoyl cysteine. C24 is lipidated: S-diacylglycerol cysteine.

The protein localises to the cell membrane. P37 is part of a high-affinity transport system. This Mesomycoplasma hyorhinis (Mycoplasma hyorhinis) protein is High affinity transport system protein p37 (p37).